The chain runs to 347 residues: Dual specificity mitogen-activated protein kinase kinase mek-1 (347 aa).

The tract at residues 1–42 is disordered; the sequence is MERDFDLGMGRPGGLGGLGGEPIMQQMPQPAPHHPSRSSNDH. The span at 10–20 shows a compositional bias: gly residues; it reads GRPGGLGGLGG. Residues 72 to 325 form the Protein kinase domain; that stretch reads LQFVEDIGHG…YDMLLQHPFV (254 aa). Residues 78 to 86 and Lys99 contribute to the ATP site; that span reads IGHGSCGTV. The active-site Proton acceptor is the Asp193. Residues Ser221 and Ser225 each carry the phosphoserine modification.

This sequence belongs to the protein kinase superfamily. STE Ser/Thr protein kinase family. MAP kinase kinase subfamily. Interacts with shc-1; the interaction is independent of mek-1 catalytic activity, is constitutive and may facilitate mlk-1-mediated phosphorylation by bringing mlk-1 and mek-1 together. Requires Mg(2+) as cofactor. May be phosphorylated at Ser-221 and/or Ser-225 by mlk-1. Expressed in pharyngeal muscles, uterine endothelial cells, intestine and in neurons of ring ganglia, ventral ganglion and ganglia around anus. Expressed also in hypodermis and body muscles.

It catalyses the reaction L-seryl-[protein] + ATP = O-phospho-L-seryl-[protein] + ADP + H(+). The enzyme catalyses L-threonyl-[protein] + ATP = O-phospho-L-threonyl-[protein] + ADP + H(+). It carries out the reaction L-tyrosyl-[protein] + ATP = O-phospho-L-tyrosyl-[protein] + ADP + H(+). With respect to regulation, may be activated by phosphorylation at Ser-221 and Ser-225. Dual specificity protein kinase which may phosphorylate kgb-1 and thereby is an essential component of the JNK pathway composed of mlk-1, mek-1 and kgb-1. May also have a synergistic role with sek-1 in phosphorylating pmk-1. Involved in the response to environmental stress including heavy metal ions (Cu(2+) and Cd(2+)), oxidative stress and starvation. In association with sek-1, regulates germline cell apoptosis in response to oxidative, osmotic and heat shock stresses. Involved in resistance to pathogenic bacteria infection. Involved in axon regeneration after injury. The chain is Dual specificity mitogen-activated protein kinase kinase mek-1 from Caenorhabditis elegans.